The chain runs to 138 residues: Basic phospholipase A2 sistruxin B (138 aa).

Positions 1–16 are cleaved as a signal peptide; that stretch reads MRALWIVAVLLVGVEG. Intrachain disulfides connect cysteine 42–cysteine 131, cysteine 44–cysteine 60, cysteine 59–cysteine 111, cysteine 65–cysteine 138, cysteine 66–cysteine 104, cysteine 73–cysteine 97, and cysteine 91–cysteine 102. Residues tyrosine 43, glycine 45, and glycine 47 each contribute to the Ca(2+) site. The active site involves histidine 63. Ca(2+) is bound at residue aspartate 64. The active site involves aspartate 105.

Heterodimer of an acidic subunit and a basic chain. The acidic subunit is non-toxic, without enzymatic activity and comprises 3 peptides that are cross-linked by 7 disulfide bridges. The basic subunit is toxic, has phospholipase A2 activity and is composed of a single chain. The cofactor is Ca(2+). Expressed by the venom gland.

It is found in the secreted. The catalysed reaction is a 1,2-diacyl-sn-glycero-3-phosphocholine + H2O = a 1-acyl-sn-glycero-3-phosphocholine + a fatty acid + H(+). Its function is as follows. Snake venom phospholipase A2 (PLA2) that shows presynaptic neurotoxicity. PLA2 catalyzes the calcium-dependent hydrolysis of the 2-acyl groups in 3-sn-phosphoglycerides. In Sistrurus tergeminus (Western massasauga), this protein is Basic phospholipase A2 sistruxin B.